Consider the following 646-residue polypeptide: Exoribonuclease 2 (646 aa).

The region spanning 191–518 (RIDLTALDFV…NHRLLKAIIQ (328 aa)) is the RNB domain. Positions 563 to 645 (DKTFSAEIVD…ETRNIVARPV (83 aa)) constitute an S1 motif domain.

This sequence belongs to the RNR ribonuclease family. RNase II subfamily.

It is found in the cytoplasm. The catalysed reaction is Exonucleolytic cleavage in the 3'- to 5'-direction to yield nucleoside 5'-phosphates.. Its function is as follows. Involved in mRNA degradation. Hydrolyzes single-stranded polyribonucleotides processively in the 3' to 5' direction. The chain is Exoribonuclease 2 from Xenorhabdus bovienii (strain SS-2004) (Xenorhabdus nematophila subsp. bovienii).